A 352-amino-acid polypeptide reads, in one-letter code: 7,8-didemethyl-8-hydroxy-5-deazariboflavin synthase (352 aa).

A Radical SAM core domain is found at 35-275 (ITFSKNAFIP…EDISIQVPPN (241 aa)). Residues C49, C53, and C56 each coordinate [4Fe-4S] cluster.

This sequence belongs to the radical SAM superfamily. CofG family. In terms of assembly, consists of two subunits, CofG and CofH. It depends on [4Fe-4S] cluster as a cofactor.

The catalysed reaction is 5-amino-5-(4-hydroxybenzyl)-6-(D-ribitylimino)-5,6-dihydrouracil + S-adenosyl-L-methionine = 7,8-didemethyl-8-hydroxy-5-deazariboflavin + 5'-deoxyadenosine + L-methionine + NH4(+) + H(+). It functions in the pathway cofactor biosynthesis; coenzyme F0 biosynthesis. Its function is as follows. Catalyzes the radical-mediated synthesis of 7,8-didemethyl-8-hydroxy-5-deazariboflavin from 5-amino-5-(4-hydroxybenzyl)-6-(D-ribitylimino)-5,6-dihydrouracil. In Methanococcus maripaludis (strain C6 / ATCC BAA-1332), this protein is 7,8-didemethyl-8-hydroxy-5-deazariboflavin synthase.